The sequence spans 839 residues: ATP-binding cassette sub-family F member 1 (839 aa).

The segment at 1 to 258 (MPKGPKQQPP…KKEKKKLKKQ (258 aa)) is disordered. Ser-22 carries the post-translational modification Phosphoserine. Over residues 29 to 39 (KKGKKDKKTKK) the composition is skewed to basic residues. The segment covering 47–64 (VEDKQAGEEEKLQKEKEQ) has biased composition (basic and acidic residues). Residues 71 to 83 (QKKKRDTRKGRRK) are compositionally biased toward basic residues. Ser-105, Ser-109, and Ser-140 each carry phosphoserine. Residues 136 to 149 (IQDESEEEKEEEEE) are compositionally biased toward acidic residues. The segment covering 150–162 (KPVLKPAKPEKNR) has biased composition (basic and acidic residues). Thr-195 is subject to Phosphothreonine. Ser-197 carries the phosphoserine modification. Residues 206–223 (TKEKEPPRPGKDKDKKGA) are compositionally biased toward basic and acidic residues. Ser-227 is modified (phosphoserine). A compositionally biased stretch (basic residues) spans 247-256 (LSKKEKKKLK). The ABC transporter 1 domain occupies 298–542 (IKLEKFSISA…MYQQKQKELL (245 aa)). 330–337 (GPNGKGKT) contacts ATP. A compositionally biased stretch (basic and acidic residues) spans 553–574 (KELKAGGKSTKQAEKQTKEVLT). The segment at 553 to 600 (KELKAGGKSTKQAEKQTKEVLTRKQQKCRRKNQDEESQDPPELLKRPR) is disordered. A Phosphoserine modification is found at Ser-589. Positions 619 to 834 (LGLHGVTFGY…VLEALGEVMV (216 aa)) constitute an ABC transporter 2 domain. ATP is bound at residue 652–659 (GPNGVGKS).

As to quaternary structure, interacts (via N-terminus) with EIF2S1; the interaction is independent of its phosphorylated status. Associates (via both ABC transporter domains) with the ribosomes. Post-translationally, phosphorylated at phosphoserine and phosphothreonine. Phosphorylation on Ser-109 and Ser-140 by CK2; inhibits association of EIF2 with ribosomes.

Its subcellular location is the cytoplasm. It localises to the nucleus. The protein localises to the nucleoplasm. The protein resides in the nucleus envelope. Its function is as follows. Required for efficient Cap- and IRES-mediated mRNA translation initiation. Not involved in the ribosome biogenesis. This chain is ATP-binding cassette sub-family F member 1 (Abcf1), found in Rattus norvegicus (Rat).